The following is a 376-amino-acid chain: Transcription factor Sp6 (376 aa).

The segment at 1-70 (MLTAVCGSLG…VDFSQGYELP (70 aa)) is disordered. Residues 118–126 (GSWWDLHPG) carry the 9aaTAD motif. A disordered region spans residues 164 to 224 (PPPHPHPHHL…SRRSVPRSSG (61 aa)). 3 consecutive C2H2-type zinc fingers follow at residues 254–278 (HNCH…LRWH), 284–308 (FVCN…LQTH), and 314–336 (FPCA…MKTH). Positions 334-343 (KTHEGAKEEA) are enriched in basic and acidic residues. The disordered stretch occupies residues 334-376 (KTHEGAKEEAAAAAQGEGKAGGVVEPPGGKGKREAEGSSASSN). Low complexity predominate over residues 344–360 (AAAAQGEGKAGGVVEPP).

Belongs to the Sp1 C2H2-type zinc-finger protein family. Ubiquitous. Preferentially expressed by proliferating epithelial cells of teeth, hair follicles and limbs.

Its subcellular location is the nucleus. In terms of biological role, promotes cell proliferation. Plays a role in tooth germ growth. Plays a role in the control of enamel mineralization. Binds the AMBN promoter. The sequence is that of Transcription factor Sp6 (Sp6) from Mus musculus (Mouse).